The following is a 603-amino-acid chain: Isovalerate--CoA ligase AAE2 (603 aa).

The protein belongs to the ATP-dependent AMP-binding enzyme family. As to expression, expressed at low levels in leaves, flowers and developing seeds.

The enzyme catalyses 3-methylbutanoate + ATP + CoA = 3-methylbutanoyl-CoA + AMP + diphosphate. It catalyses the reaction hexanoate + ATP + CoA = hexanoyl-CoA + AMP + diphosphate. It carries out the reaction butanoate + ATP + CoA = butanoyl-CoA + AMP + diphosphate. The catalysed reaction is pentanoate + ATP + CoA = pentanoyl-CoA + AMP + diphosphate. The enzyme catalyses 3-methylpentanoate + ATP + CoA = 3-methylpentanoyl-CoA + AMP + diphosphate. It catalyses the reaction 4-methylpentanoate + ATP + CoA = 4-methylpentanoyl-CoA + AMP + diphosphate. Functionally, catalyzes the ligation of CoA on isovalerate to produce 3-methylbutanoyl-CoA. Can also use butanoate, pentanoate, hexanoate, 3-methylpentanoate and 4-methylpentanoate as substrates with a lower efficiency. This is Isovalerate--CoA ligase AAE2 from Arabidopsis thaliana (Mouse-ear cress).